The primary structure comprises 663 residues: UvrABC system protein B (663 aa).

Over residues 1–10 (MIDKRDDKPF) the composition is skewed to basic and acidic residues. The interval 1–23 (MIDKRDDKPFKLKSKYKPSGDQP) is disordered. Positions 31 to 271 (DNIEGGEKAQ…EQSIAKIQAE (241 aa)) constitute a Helicase ATP-binding domain. 44 to 51 (GATGTGKT) contributes to the ATP binding site. A Beta-hairpin motif is present at residues 97–120 (YYDYYQPEAYVPSSDTYIEKDSSV). In terms of domain architecture, Helicase C-terminal spans 435-601 (QMDDLLGEIN…TIKKDIRGLI (167 aa)). The region spanning 627 to 662 (KEAINALQKQMQEAAELLDFELAAQMRDLILELKLM) is the UVR domain.

The protein belongs to the UvrB family. Forms a heterotetramer with UvrA during the search for lesions. Interacts with UvrC in an incision complex.

The protein localises to the cytoplasm. The UvrABC repair system catalyzes the recognition and processing of DNA lesions. A damage recognition complex composed of 2 UvrA and 2 UvrB subunits scans DNA for abnormalities. Upon binding of the UvrA(2)B(2) complex to a putative damaged site, the DNA wraps around one UvrB monomer. DNA wrap is dependent on ATP binding by UvrB and probably causes local melting of the DNA helix, facilitating insertion of UvrB beta-hairpin between the DNA strands. Then UvrB probes one DNA strand for the presence of a lesion. If a lesion is found the UvrA subunits dissociate and the UvrB-DNA preincision complex is formed. This complex is subsequently bound by UvrC and the second UvrB is released. If no lesion is found, the DNA wraps around the other UvrB subunit that will check the other stand for damage. The protein is UvrABC system protein B of Streptococcus pyogenes serotype M2 (strain MGAS10270).